The sequence spans 329 residues: Aspartate--ammonia ligase (329 aa).

It belongs to the class-II aminoacyl-tRNA synthetase family. AsnA subfamily.

It localises to the cytoplasm. The enzyme catalyses L-aspartate + NH4(+) + ATP = L-asparagine + AMP + diphosphate + H(+). It participates in amino-acid biosynthesis; L-asparagine biosynthesis; L-asparagine from L-aspartate (ammonia route): step 1/1. The protein is Aspartate--ammonia ligase of Ureaplasma parvum serovar 3 (strain ATCC 27815 / 27 / NCTC 11736).